The chain runs to 198 residues: MAEKQTAKRNRREEILQSLALMLESSDGSQRITTAKLAASVGVSEAALYRHFPSKTRMFDSLIEFIEDSLITRINLILKDEKNTSTRLRLIMLLILGFGERNPGLTRILTGHALMFEQDRLQGRINQLFERIEAQLRQVLREKRMREGEGYTTDENLLASQLLAFCEGMLSRFVRSEFKYRPTDDFDARWPLIAAQLQ.

The region spanning 10–70 (NRREEILQSL…SLIEFIEDSL (61 aa)) is the HTH tetR-type domain. The H-T-H motif DNA-binding region spans 33 to 52 (TTAKLAASVGVSEAALYRHF). A coiled-coil region spans residues 117-144 (EQDRLQGRINQLFERIEAQLRQVLREKR).

This sequence belongs to the nucleoid occlusion factor SlmA family. As to quaternary structure, homodimer. Interacts with FtsZ.

The protein resides in the cytoplasm. The protein localises to the nucleoid. In terms of biological role, required for nucleoid occlusion (NO) phenomenon, which prevents Z-ring formation and cell division over the nucleoid. Acts as a DNA-associated cell division inhibitor that binds simultaneously chromosomal DNA and FtsZ, and disrupts the assembly of FtsZ polymers. SlmA-DNA-binding sequences (SBS) are dispersed on non-Ter regions of the chromosome, preventing FtsZ polymerization at these regions. The chain is Nucleoid occlusion factor SlmA from Salmonella dublin (strain CT_02021853).